The following is a 541-amino-acid chain: Beta-glucuronidase (541 aa).

Residues 1-20 (MHHHPITLLSLLLGAAQSIA) form the signal peptide. Residues N69, N115, and N157 are each glycosylated (N-linked (GlcNAc...) asparagine). E208 serves as the catalytic Proton donor. Residues N217, N291, and N304 are each glycosylated (N-linked (GlcNAc...) asparagine). Catalysis depends on E324, which acts as the Nucleophile. 5 N-linked (GlcNAc...) asparagine glycosylation sites follow: N380, N426, N441, N483, and N512.

Belongs to the glycosyl hydrolase 79 family. In terms of processing, N-glycosylated.

Its subcellular location is the secreted. It catalyses the reaction a beta-D-glucuronoside + H2O = D-glucuronate + an alcohol. Its function is as follows. Beta-glucuronidase that hydrolyzes beta-glucuronosyl and 4-O-methyl-beta-glucuronosyl residues of arabinogalactan-protein. Hydrolyzed heparan sulfate only very weakly. Has no activity on xylan from birchwood. Able to catalyze the transglycosylation of glucuronic acid (GlcA) residues from p-nitrophenyl-beta-glucuronic acid (PNP beta-GlcA) to various monosaccharide acceptors such as glucose, galactose and xylose. The chain is Beta-glucuronidase from Aspergillus niger (strain ATCC MYA-4892 / CBS 513.88 / FGSC A1513).